We begin with the raw amino-acid sequence, 146 residues long: MKLHELKPAPGARTKPTRRGQGIGSGMGKTAGRGHKGQKARSGGGVRPGFEGGQMPLQRRMPKRGFTNRFKKEIIAVNIEKLNRFENGTTVTPEALLAARVIKKTGDGVKILGNGNLEKSLTVQAHAFSSTARQKIEAAGGRAEVI.

A disordered region spans residues 1 to 66; that stretch reads MKLHELKPAP…LQRRMPKRGF (66 aa). Gly residues-rich tracts occupy residues 21 to 31 and 42 to 52; these read QGIGSGMGKTA and SGGGVRPGFEG.

The protein belongs to the universal ribosomal protein uL15 family. Part of the 50S ribosomal subunit.

Its function is as follows. Binds to the 23S rRNA. In Pelotomaculum thermopropionicum (strain DSM 13744 / JCM 10971 / SI), this protein is Large ribosomal subunit protein uL15.